Reading from the N-terminus, the 605-residue chain is DNA mismatch repair protein MutL (605 aa).

This sequence belongs to the DNA mismatch repair MutL/HexB family.

In terms of biological role, this protein is involved in the repair of mismatches in DNA. It is required for dam-dependent methyl-directed DNA mismatch repair. May act as a 'molecular matchmaker', a protein that promotes the formation of a stable complex between two or more DNA-binding proteins in an ATP-dependent manner without itself being part of a final effector complex. The protein is DNA mismatch repair protein MutL of Pelotomaculum thermopropionicum (strain DSM 13744 / JCM 10971 / SI).